Here is a 100-residue protein sequence, read N- to C-terminus: Large ribosomal subunit protein uL23 (100 aa).

Belongs to the universal ribosomal protein uL23 family. In terms of assembly, part of the 50S ribosomal subunit. Contacts protein L29, and trigger factor when it is bound to the ribosome.

In terms of biological role, one of the early assembly proteins it binds 23S rRNA. One of the proteins that surrounds the polypeptide exit tunnel on the outside of the ribosome. Forms the main docking site for trigger factor binding to the ribosome. This Xylella fastidiosa (strain 9a5c) protein is Large ribosomal subunit protein uL23.